Here is a 209-residue protein sequence, read N- to C-terminus: Large ribosomal subunit protein bL25 (209 aa).

Positions 185–209 are disordered; it reads SKATTGEEEGAEAAGEGEEAEEKPE. A compositionally biased stretch (acidic residues) spans 190–209; that stretch reads GEEEGAEAAGEGEEAEEKPE.

The protein belongs to the bacterial ribosomal protein bL25 family. CTC subfamily. As to quaternary structure, part of the 50S ribosomal subunit; part of the 5S rRNA/L5/L18/L25 subcomplex. Contacts the 5S rRNA. Binds to the 5S rRNA independently of L5 and L18.

Functionally, this is one of the proteins that binds to the 5S RNA in the ribosome where it forms part of the central protuberance. This chain is Large ribosomal subunit protein bL25, found in Syntrophomonas wolfei subsp. wolfei (strain DSM 2245B / Goettingen).